The primary structure comprises 154 residues: Myoglobin (154 aa).

The region spanning 2–148 (GLSDQEWQQV…FRNDMASKYK (147 aa)) is the Globin domain. H65 serves as a coordination point for nitrite. H65 serves as a coordination point for O2. H94 provides a ligand contact to heme b.

The protein belongs to the globin family. As to quaternary structure, monomeric.

It localises to the cytoplasm. The protein resides in the sarcoplasm. It catalyses the reaction Fe(III)-heme b-[protein] + nitric oxide + H2O = Fe(II)-heme b-[protein] + nitrite + 2 H(+). The catalysed reaction is H2O2 + AH2 = A + 2 H2O. Its function is as follows. Monomeric heme protein which primary function is to store oxygen and facilitate its diffusion within muscle tissues. Reversibly binds oxygen through a pentacoordinated heme iron and enables its timely and efficient release as needed during periods of heightened demand. Depending on the oxidative conditions of tissues and cells, and in addition to its ability to bind oxygen, it also has a nitrite reductase activity whereby it regulates the production of bioactive nitric oxide. Under stress conditions, like hypoxia and anoxia, it also protects cells against reactive oxygen species thanks to its pseudoperoxidase activity. The chain is Myoglobin (MB) from Gallus gallus (Chicken).